Here is a 93-residue protein sequence, read N- to C-terminus: Small ribosomal subunit protein uS15 (93 aa).

The protein belongs to the universal ribosomal protein uS15 family. In terms of assembly, part of the 30S ribosomal subunit. Forms a bridge to the 50S subunit in the 70S ribosome, contacting the 23S rRNA.

Functionally, one of the primary rRNA binding proteins, it binds directly to 16S rRNA where it helps nucleate assembly of the platform of the 30S subunit by binding and bridging several RNA helices of the 16S rRNA. Forms an intersubunit bridge (bridge B4) with the 23S rRNA of the 50S subunit in the ribosome. The chain is Small ribosomal subunit protein uS15 from Anaplasma marginale (strain St. Maries).